We begin with the raw amino-acid sequence, 534 residues long: CTP synthase (534 aa).

Residues 1–267 form an amidoligase domain region; that stretch reads MTKYIFVTGG…DQIVCDHLKL (267 aa). Serine 13 contacts CTP. Serine 13 contributes to the UTP binding site. 14-19 is an ATP binding site; the sequence is SIGKGI. An L-glutamine-binding site is contributed by tyrosine 54. Aspartate 71 serves as a coordination point for ATP. Mg(2+) is bound by residues aspartate 71 and glutamate 141. CTP is bound by residues 148 to 150, 188 to 193, and lysine 224; these read DIE and KTKPTQ. UTP contacts are provided by residues 188–193 and lysine 224; that span reads KTKPTQ. 240–242 is a binding site for ATP; sequence RDV. The Glutamine amidotransferase type-1 domain maps to 292–534; that stretch reads KIALVGKYVE…FVTAAIKNSN (243 aa). Glycine 354 contributes to the L-glutamine binding site. The active-site Nucleophile; for glutamine hydrolysis is cysteine 381. L-glutamine-binding positions include 382-385, glutamate 405, and arginine 463; that span reads LGMQ. Active-site residues include histidine 508 and glutamate 510.

Belongs to the CTP synthase family. As to quaternary structure, homotetramer.

The enzyme catalyses UTP + L-glutamine + ATP + H2O = CTP + L-glutamate + ADP + phosphate + 2 H(+). It carries out the reaction L-glutamine + H2O = L-glutamate + NH4(+). It catalyses the reaction UTP + NH4(+) + ATP = CTP + ADP + phosphate + 2 H(+). It functions in the pathway pyrimidine metabolism; CTP biosynthesis via de novo pathway; CTP from UDP: step 2/2. With respect to regulation, allosterically activated by GTP, when glutamine is the substrate; GTP has no effect on the reaction when ammonia is the substrate. The allosteric effector GTP functions by stabilizing the protein conformation that binds the tetrahedral intermediate(s) formed during glutamine hydrolysis. Inhibited by the product CTP, via allosteric rather than competitive inhibition. In terms of biological role, catalyzes the ATP-dependent amination of UTP to CTP with either L-glutamine or ammonia as the source of nitrogen. Regulates intracellular CTP levels through interactions with the four ribonucleotide triphosphates. The chain is CTP synthase from Streptococcus pyogenes serotype M1.